A 60-amino-acid polypeptide reads, in one-letter code: Ribosome modulation factor (60 aa).

This sequence belongs to the ribosome modulation factor family.

The protein resides in the cytoplasm. During stationary phase, converts 70S ribosomes to an inactive dimeric form (100S ribosomes). The chain is Ribosome modulation factor from Kangiella koreensis (strain DSM 16069 / JCM 12317 / KCTC 12182 / SW-125).